Consider the following 316-residue polypeptide: uncharacterized protein (316 aa).

BNR repeat units lie at residues 62–73 (FISDSQGLKFSP), 124–135 (KISVDNGLTWSN), 196–207 (FISRDGGLTWRV), and 242–253 (YFSLDQGRTWNQ).

This is an uncharacterized protein from Saccharomyces cerevisiae (strain ATCC 204508 / S288c) (Baker's yeast).